Consider the following 499-residue polypeptide: Putative sodium-dependent excitatory amino acid transporter glt-4 (499 aa).

The Cytoplasmic portion of the chain corresponds to 1-7; that stretch reads MAKLSKE. 3 consecutive transmembrane segments (helical) span residues 8 to 28, 50 to 70, and 87 to 107; these read NLLL…GFSL, FVQM…ITSL, and IYYT…VSVI. N165 is a glycosylation site (N-linked (GlcNAc...) asparagine). Helical transmembrane passes span 194 to 217, 227 to 254, and 276 to 297; these read VSDG…IGVI, FFKS…TFLI, and ITVI…CVVL. Residues 303-333 constitute an intramembrane region (discontinuously helical); the sequence is IKFVGGMAQALLTALATSSSSATLPLSIKCC. 320–322 is a binding site for L-aspartate; sequence SSS. A helical membrane pass occupies residues 343 to 369; it reads VTRFVLPLGATINMDGTALYEAVAAIY. Na(+) contacts are provided by G351, T353, and N355. L-aspartate contacts are provided by residues T359, 400–404, D433, and N440; that span reads IPQAG. Positions 383 to 416 form an intramembrane region, discontinuously helical; it reads VVLVSLTATLASIGAAGIPQAGIVTMIMVLIAIG. A helical transmembrane segment spans residues 430–451; sequence FMLDRLRTTVNVHGDSIATAVI. Na(+) is bound by residues N440 and D444.

It belongs to the dicarboxylate/amino acid:cation symporter (DAACS) (TC 2.A.23) family.

It is found in the cell membrane. Sodium-dependent, high-affinity amino acid transporter that mediates the uptake of L-glutamate and also L-aspartate and D-aspartate. Functions as a symporter that transports one amino acid molecule together with two or three Na(+) ions and one proton, in parallel with the counter-transport of one K(+) ion. Mediates Cl(-) flux that is not coupled to amino acid transport; this avoids the accumulation of negative charges due to aspartate and Na(+) symport. The sequence is that of Putative sodium-dependent excitatory amino acid transporter glt-4 (glt-4) from Caenorhabditis elegans.